A 526-amino-acid polypeptide reads, in one-letter code: Sugar transport protein 13 (526 aa).

Topologically, residues 1-18 (MTGGGFATSANGVEFEAK) are cytoplasmic. A helical transmembrane segment spans residues 19 to 39 (ITPIVIISCIMAATGGLMFGY). Residues 40–81 (DVGVSGGVTSMPDFLEKFFPVVYRKVVAGADKDSNYCKYDNQ) lie on the Extracellular side of the membrane. Residues 82–102 (GLQLFTSSLYLAGLTATFFAS) traverse the membrane as a helical segment. At 103–111 (YTTRTLGRR) the chain is on the cytoplasmic side. Residues 112–132 (LTMLIAGVFFIIGVALNAGAQ) form a helical membrane-spanning segment. At 133–141 (DLAMLIAGR) the chain is on the extracellular side. A helical membrane pass occupies residues 142-162 (ILLGCGVGFANQAVPLFLSEI). The Cytoplasmic portion of the chain corresponds to 163–168 (APTRIR). A helical membrane pass occupies residues 169–189 (GGLNILFQLNVTIGILFANLV). Over 190 to 203 (NYGTAKIKGGWGWR) the chain is Extracellular. The helical transmembrane segment at 204 to 224 (LSLGLAGIPALLLTVGALLVT) threads the bilayer. The Cytoplasmic portion of the chain corresponds to 225 to 296 (ETPNSLVERG…IAVALQIFQQ (72 aa)). The helical transmembrane segment at 297–317 (CTGINAIMFYAPVLFSTLGFG) threads the bilayer. At 318–319 (SD) the chain is on the extracellular side. A helical transmembrane segment spans residues 320–340 (ASLYSAVVTGAVNVLSTLVSI). At 341–349 (YSVDKVGRR) the chain is on the cytoplasmic side. Residues 350-370 (VLLLEAGVQMFFSQVVIAIIL) form a helical membrane-spanning segment. Residues 371–383 (GVKVTDTSTNLSK) lie on the Extracellular side of the membrane. The chain crosses the membrane as a helical span at residues 384 to 404 (GFAILVVVMICTYVAAFAWSW). Over 405–426 (GPLGWLIPSETFPLETRSAGQS) the chain is Cytoplasmic. Residues 427–447 (VTVCVNLLFTFIIAQAFLSML) traverse the membrane as a helical segment. Over 448–451 (CHFK) the chain is Extracellular. A helical transmembrane segment spans residues 452–472 (FGIFIFFSAWVLIMSVFVMFL). The Cytoplasmic segment spans residues 473 to 526 (LPETKNIPIEEMTERVWKKHWFWARFMDDHNDHEFVNGEKSNGKSNGFDPSTRL).

Belongs to the major facilitator superfamily. Sugar transporter (TC 2.A.1.1) family.

The protein resides in the cell membrane. In terms of biological role, mediates an active uptake of hexoses, probably by sugar/hydrogen symport. The protein is Sugar transport protein 13 (STP13) of Arabidopsis thaliana (Mouse-ear cress).